A 597-amino-acid polypeptide reads, in one-letter code: Elongation factor 4 (597 aa).

In terms of domain architecture, tr-type G spans 2 to 184 (KHIRNFSIIA…NIVSAIPAPE (183 aa)). Residues 14–19 (DHGKST) and 131–134 (NKID) contribute to the GTP site.

The protein belongs to the TRAFAC class translation factor GTPase superfamily. Classic translation factor GTPase family. LepA subfamily.

It is found in the cell inner membrane. It carries out the reaction GTP + H2O = GDP + phosphate + H(+). Its function is as follows. Required for accurate and efficient protein synthesis under certain stress conditions. May act as a fidelity factor of the translation reaction, by catalyzing a one-codon backward translocation of tRNAs on improperly translocated ribosomes. Back-translocation proceeds from a post-translocation (POST) complex to a pre-translocation (PRE) complex, thus giving elongation factor G a second chance to translocate the tRNAs correctly. Binds to ribosomes in a GTP-dependent manner. The polypeptide is Elongation factor 4 (Vibrio campbellii (strain ATCC BAA-1116)).